The sequence spans 142 residues: UPF0102 protein Bamb_0202 (142 aa).

Positions 1 to 23 (MCHAAPAAPASGRGLPHGGGNFS) are disordered.

The protein belongs to the UPF0102 family.

This Burkholderia ambifaria (strain ATCC BAA-244 / DSM 16087 / CCUG 44356 / LMG 19182 / AMMD) (Burkholderia cepacia (strain AMMD)) protein is UPF0102 protein Bamb_0202.